Here is a 130-residue protein sequence, read N- to C-terminus: DCPWDWSSHEGHCYKVFKFATTWEDAEKFCTEQARGGHLISIKSTEEVDFMIKLAYPILKANLVWIGLRVEDFWRDCHMGWRDHANLLSKPGVVHNTKCFGLDQKTGYRTWVALRCELAYHFICMSRVPR.

3 disulfides stabilise this stretch: C2–C13, C30–C124, and C99–C116. In terms of domain architecture, C-type lectin spans 9–125; the sequence is HEGHCYKVFK…CELAYHFICM (117 aa).

The protein belongs to the snaclec family. In terms of assembly, heterodimer; disulfide-linked. Expressed by the venom gland.

Its subcellular location is the secreted. In terms of biological role, interferes with one step of hemostasis (modulation of platelet aggregation, or coagulation cascade, for example). The protein is Snaclec B8 of Macrovipera lebetinus (Levantine viper).